Consider the following 438-residue polypeptide: Methylenetetrahydrofolate--tRNA-(uracil-5-)-methyltransferase TrmFO (438 aa).

9-14 (GAGLAG) is a binding site for FAD.

The protein belongs to the MnmG family. TrmFO subfamily. Requires FAD as cofactor.

It is found in the cytoplasm. The catalysed reaction is uridine(54) in tRNA + (6R)-5,10-methylene-5,6,7,8-tetrahydrofolate + NADH + H(+) = 5-methyluridine(54) in tRNA + (6S)-5,6,7,8-tetrahydrofolate + NAD(+). The enzyme catalyses uridine(54) in tRNA + (6R)-5,10-methylene-5,6,7,8-tetrahydrofolate + NADPH + H(+) = 5-methyluridine(54) in tRNA + (6S)-5,6,7,8-tetrahydrofolate + NADP(+). Catalyzes the folate-dependent formation of 5-methyl-uridine at position 54 (M-5-U54) in all tRNAs. The chain is Methylenetetrahydrofolate--tRNA-(uracil-5-)-methyltransferase TrmFO from Lactobacillus acidophilus (strain ATCC 700396 / NCK56 / N2 / NCFM).